A 446-amino-acid polypeptide reads, in one-letter code: NADH-dependent phenylglyoxylate dehydrogenase subunit beta (446 aa).

4Fe-4S ferredoxin-type domains lie at serine 6 to isoleucine 35, alanine 49 to threonine 80, glycine 82 to alanine 111, and aspartate 109 to threonine 141.

Dimer of heteropentamers composed of an alpha (PadG), a beta (PadI), a gamma (PadE), a delta (PadF) and an epsilon (PadH) subunit. It depends on [4Fe-4S] cluster as a cofactor.

The enzyme catalyses phenylglyoxylate + NAD(+) + CoA = benzoyl-CoA + CO2 + NADH. With respect to regulation, activated by magnesium ions and thiamine diphosphate. Involved in the anaerobic metabolism of phenylalanine and phenylacetate. Catalyzes the oxidative decarboxylation of phenylglyoxylate to benzoyl-CoA and CO(2). It can also react slowly with 2-oxo-3-methylbutanoate and use different electron acceptors such as benzyl viologen, methyl viologen, FAD or FMN, but NAD seems to be the physiological electron acceptor. Also catalyzes an isotope exchange between CO(2) and the carboxyl group which proves partial or complete reversibility of the oxidative decarboxylation reaction. This chain is NADH-dependent phenylglyoxylate dehydrogenase subunit beta (padI), found in Aromatoleum evansii (Azoarcus evansii).